The primary structure comprises 311 residues: tRNA pseudouridine synthase B (311 aa).

Histidine 43 serves as a coordination point for substrate. Residue aspartate 48 is the Nucleophile of the active site. 3 residues coordinate substrate: tyrosine 76, tyrosine 179, and leucine 200.

This sequence belongs to the pseudouridine synthase TruB family. Type 1 subfamily.

It carries out the reaction uridine(55) in tRNA = pseudouridine(55) in tRNA. Responsible for synthesis of pseudouridine from uracil-55 in the psi GC loop of transfer RNAs. The protein is tRNA pseudouridine synthase B of Sodalis glossinidius (strain morsitans).